The chain runs to 411 residues: 2-oxoglutarate-dependent dioxygenase AOP3 (411 aa).

The Fe2OG dioxygenase domain occupies 259–356 (GNASVGAKEA…RYAAALFSNP (98 aa)). Positions 279, 281, and 336 each coordinate Fe cation. Residue Arg347 participates in 2-oxoglutarate binding.

Belongs to the iron/ascorbate-dependent oxidoreductase family. The cofactor is Fe(2+). As to expression, not expressed.

Functionally, 2-oxoglutarate-dependent dioxygenase involved in glucosinolates biosynthesis. Catalyzes the conversion of methylsulfinylalkyl glucosinolates to hydroxyalkyl glucosinolates. This chain is 2-oxoglutarate-dependent dioxygenase AOP3 (AOP3), found in Arabidopsis thaliana (Mouse-ear cress).